Reading from the N-terminus, the 348-residue chain is Fructose-1,6-bisphosphatase class 1 (348 aa).

E92, D111, L113, and D114 together coordinate Mg(2+). Residues 114–117 (DGSS) and N204 each bind substrate. Position 276 (E276) interacts with Mg(2+).

The protein belongs to the FBPase class 1 family. As to quaternary structure, homotetramer. Requires Mg(2+) as cofactor.

Its subcellular location is the cytoplasm. The catalysed reaction is beta-D-fructose 1,6-bisphosphate + H2O = beta-D-fructose 6-phosphate + phosphate. Its pathway is carbohydrate biosynthesis; gluconeogenesis. In Methylorubrum extorquens (strain CM4 / NCIMB 13688) (Methylobacterium extorquens), this protein is Fructose-1,6-bisphosphatase class 1.